Consider the following 252-residue polypeptide: UPF0273 protein MK0039 (252 aa).

A KaiC domain is found at 4 to 248; sequence ERVSTGIPGM…VFVKERGEVR (245 aa). Residue 31–38 participates in ATP binding; it reads GGPGTGKT.

This sequence belongs to the UPF0273 family.

The sequence is that of UPF0273 protein MK0039 from Methanopyrus kandleri (strain AV19 / DSM 6324 / JCM 9639 / NBRC 100938).